Reading from the N-terminus, the 567-residue chain is Glucose-6-phosphate isomerase, cytosolic (567 aa).

E360 functions as the Proton donor in the catalytic mechanism. Catalysis depends on residues H391 and K516.

This sequence belongs to the GPI family. As to quaternary structure, homodimer.

It localises to the cytoplasm. The catalysed reaction is alpha-D-glucose 6-phosphate = beta-D-fructose 6-phosphate. Its pathway is carbohydrate degradation; glycolysis; D-glyceraldehyde 3-phosphate and glycerone phosphate from D-glucose: step 2/4. The protein is Glucose-6-phosphate isomerase, cytosolic (PHI1) of Zea mays (Maize).